The chain runs to 117 residues: Transcription elongation factor SPT4-B (117 aa).

An interaction with SUPT5H region spans residues 1-40 (MALETVPKDLRHLRACLLCSLVKTIDQFEYDGCDNCDAYL). The C4-type zinc finger occupies 16 to 36 (CLLCSLVKTIDQFEYDGCDNC).

Belongs to the SPT4 family. In terms of assembly, interacts with SUPT5H to form DSIF. DSIF interacts with the positive transcription elongation factor b complex (P-TEFb complex), which is composed of CDK9 and cyclin-T (CCNT1 or CCNT2). DSIF interacts with RNA polymerase II, and this interaction is reduced by phosphorylation of the C-terminal domain (CTD) of POLR2A by P-TEFb. DSIF also interacts with the NELF complex, which is composed of WHSC2/NELFA, COBRA1/NELFB, TH1L/NELFD and RDBP/NELFE, and this interaction occurs following prior binding of DSIF to RNA polymerase II. DSIF also interacts with HRMT1L2/PRMT1, HTATSF1/TATSF1, RNGTT/CAP1A, SKB1/PRMT5, SUPT6H, and can interact with PIN1. In terms of processing, ubiquitinated by Ubr5 when not assembled in the DSIF complex, leading to its degradation: Ubr5 recognizes and binds a degron that is not accessible when Supt4h1b is part of the DSIF complex. As to expression, expressed in brain, heart and liver.

The protein localises to the nucleus. Component of the DRB sensitivity-inducing factor complex (DSIF complex), which regulates mRNA processing and transcription elongation by RNA polymerase II. DSIF positively regulates mRNA capping by stimulating the mRNA guanylyltransferase activity of RNGTT/CAP1A. DSIF also acts cooperatively with the negative elongation factor complex (NELF complex) to enhance transcriptional pausing at sites proximal to the promoter. Transcriptional pausing may facilitate the assembly of an elongation competent RNA polymerase II complex. DSIF and NELF promote pausing by inhibition of the transcription elongation factor TFIIS/S-II. TFIIS/S-II binds to RNA polymerase II at transcription pause sites and stimulates the weak intrinsic nuclease activity of the enzyme. Cleavage of blocked transcripts by RNA polymerase II promotes the resumption of transcription from the new 3' terminus and may allow repeated attempts at transcription through natural pause sites. This chain is Transcription elongation factor SPT4-B (Supt4h1b), found in Mus musculus (Mouse).